The chain runs to 208 residues: Uracil phosphoribosyltransferase (208 aa).

5-phospho-alpha-D-ribose 1-diphosphate is bound by residues arginine 78, arginine 103, and 130–138 (DPMLATGGS). Uracil contacts are provided by residues isoleucine 193 and 198 to 200 (GDA). Residue aspartate 199 coordinates 5-phospho-alpha-D-ribose 1-diphosphate.

The protein belongs to the UPRTase family. Mg(2+) is required as a cofactor.

The enzyme catalyses UMP + diphosphate = 5-phospho-alpha-D-ribose 1-diphosphate + uracil. Its pathway is pyrimidine metabolism; UMP biosynthesis via salvage pathway; UMP from uracil: step 1/1. Allosterically activated by GTP. Catalyzes the conversion of uracil and 5-phospho-alpha-D-ribose 1-diphosphate (PRPP) to UMP and diphosphate. The chain is Uracil phosphoribosyltransferase from Actinobacillus pleuropneumoniae serotype 5b (strain L20).